We begin with the raw amino-acid sequence, 122 residues long: Cytochrome c3 hydrogenase large chain (122 aa).

Fe cation serves as cofactor.

The catalysed reaction is 2 Fe(III)-[cytochrome c3] + H2 = 2 Fe(II)-[cytochrome c3] + 2 H(+). The chain is Cytochrome c3 hydrogenase large chain (hoxG) from Acidithiobacillus ferrooxidans (Thiobacillus ferrooxidans).